The following is a 143-amino-acid chain: uncharacterized protein (143 aa).

This is an uncharacterized protein from Thermoproteus tenax virus 1 (strain KRA1) (TTV1).